We begin with the raw amino-acid sequence, 282 residues long: DegV domain-containing protein M6_Spy0690 (282 aa).

The 278-residue stretch at 3-280 (LAVITDSTAT…EGAIAFGVTP (278 aa)) folds into the DegV domain. Hexadecanoate-binding residues include threonine 61 and serine 94.

Functionally, may bind long-chain fatty acids, such as palmitate, and may play a role in lipid transport or fatty acid metabolism. This is DegV domain-containing protein M6_Spy0690 from Streptococcus pyogenes serotype M6 (strain ATCC BAA-946 / MGAS10394).